Reading from the N-terminus, the 265-residue chain is Cell adhesion molecule CEACAM10 (265 aa).

Residues 1–33 (MELASAHLHKGQVPWVGLLLTASLLTYWSPATT) form the signal peptide. 2 Ig-like V-type domains span residues 35–142 (QVTV…HVHP) and 155–262 (QVTV…NVHA). N-linked (GlcNAc...) asparagine glycans are attached at residues Asn44, Asn87, and Asn224.

It belongs to the immunoglobulin superfamily. CEA family. Abundant in seminal vesicle and traces in epididymis and prostate (at protein level). Highly expressed in seminal vesicle, minor in colon and placenta and, to a lesser extent, in small intestine, caecum, stomach, salivary gland and bone marrow.

It is found in the secreted. It localises to the extracellular space. May interact with other CEACAM proteins on the sperm surface. This is Cell adhesion molecule CEACAM10 from Mus musculus (Mouse).